The following is a 915-amino-acid chain: Alanine--tRNA ligase (915 aa).

Zn(2+)-binding residues include His605, His609, Cys709, and His713. Residues 882–901 (GGGGDERLAQGGGRNPDGLT) are disordered.

Belongs to the class-II aminoacyl-tRNA synthetase family. It depends on Zn(2+) as a cofactor.

Its subcellular location is the cytoplasm. It catalyses the reaction tRNA(Ala) + L-alanine + ATP = L-alanyl-tRNA(Ala) + AMP + diphosphate. In terms of biological role, catalyzes the attachment of alanine to tRNA(Ala) in a two-step reaction: alanine is first activated by ATP to form Ala-AMP and then transferred to the acceptor end of tRNA(Ala). Also edits incorrectly charged Ser-tRNA(Ala) and Gly-tRNA(Ala) via its editing domain. This chain is Alanine--tRNA ligase, found in Methanopyrus kandleri (strain AV19 / DSM 6324 / JCM 9639 / NBRC 100938).